We begin with the raw amino-acid sequence, 205 residues long: LexA repressor (205 aa).

A DNA-binding region (H-T-H motif) is located at residues 28–48; that stretch reads RAELMRAFDFRSPNAAESHLR. Catalysis depends on for autocatalytic cleavage activity residues serine 120 and lysine 159.

This sequence belongs to the peptidase S24 family. In terms of assembly, homodimer.

The enzyme catalyses Hydrolysis of Ala-|-Gly bond in repressor LexA.. Functionally, represses a number of genes involved in the response to DNA damage (SOS response), including recA and lexA. In the presence of single-stranded DNA, RecA interacts with LexA causing an autocatalytic cleavage which disrupts the DNA-binding part of LexA, leading to derepression of the SOS regulon and eventually DNA repair. This chain is LexA repressor, found in Acidithiobacillus ferrooxidans (strain ATCC 23270 / DSM 14882 / CIP 104768 / NCIMB 8455) (Ferrobacillus ferrooxidans (strain ATCC 23270)).